The following is a 359-amino-acid chain: Oxopyrrolidines biosynthesis cluster protein G (359 aa).

The disordered stretch occupies residues 1–32; sequence MDHLRDSLLSSLPRDSPSIGAMDYARRDREST. A compositionally biased stretch (low complexity) spans 7 to 18; that stretch reads SLLSSLPRDSPS.

Its function is as follows. Part of the gene cluster that mediates the biosynthesis of oxopyrrolidines, polyketide-amino acid hybrid compounds with feature structures of tetramic acid. Does not seem to play a role in oxopyrrolidines A and B biosynthesis. This chain is Oxopyrrolidines biosynthesis cluster protein G, found in Penicillium oxalicum (strain 114-2 / CGMCC 5302) (Penicillium decumbens).